The following is a 217-amino-acid chain: Thiopurine S-methyltransferase (217 aa).

Residues Trp-10, Leu-45, Glu-66, and Arg-127 each contribute to the S-adenosyl-L-methionine site.

The protein belongs to the class I-like SAM-binding methyltransferase superfamily. TPMT family.

The protein resides in the cytoplasm. It carries out the reaction S-adenosyl-L-methionine + a thiopurine = S-adenosyl-L-homocysteine + a thiopurine S-methylether.. The protein is Thiopurine S-methyltransferase of Acinetobacter baylyi (strain ATCC 33305 / BD413 / ADP1).